The sequence spans 201 residues: Adenylyl-sulfate kinase (201 aa).

Residue Gly35 to Ser42 participates in ATP binding. Residue Ser109 is the Phosphoserine intermediate of the active site.

It belongs to the APS kinase family.

The catalysed reaction is adenosine 5'-phosphosulfate + ATP = 3'-phosphoadenylyl sulfate + ADP + H(+). It functions in the pathway sulfur metabolism; hydrogen sulfide biosynthesis; sulfite from sulfate: step 2/3. Its function is as follows. Catalyzes the synthesis of activated sulfate. The sequence is that of Adenylyl-sulfate kinase from Salmonella gallinarum (strain 287/91 / NCTC 13346).